A 637-amino-acid polypeptide reads, in one-letter code: Epithelial sodium channel subunit alpha (637 aa).

The disordered stretch occupies residues 1 to 34 (MGTASRGGSVKAEKMPEGEKTRQCKQETEQQQKE). Topologically, residues 1–76 (MGTASRGGSV…VCSKKNKMKT (76 aa)) are cytoplasmic. Over residues 11–34 (KAEKMPEGEKTRQCKQETEQQQKE) the composition is skewed to basic and acidic residues. The helical transmembrane segment at 77-97 (AFWSVLFILTFGLMYWQFGIL) threads the bilayer. Residues 98-548 (YREYFSYPVN…NQWSLWFGSS (451 aa)) lie on the Extracellular side of the membrane. Disulfide bonds link cysteine 125-cysteine 292, cysteine 217-cysteine 224, cysteine 269-cysteine 276, cysteine 380-cysteine 465, cysteine 402-cysteine 442, cysteine 402-cysteine 461, cysteine 406-cysteine 457, cysteine 415-cysteine 442, cysteine 415-cysteine 465, and cysteine 417-cysteine 431. The chain crosses the membrane as a helical span at residues 549–569 (VLSVMELAELILDFTVITFIL). The Cytoplasmic portion of the chain corresponds to 570–637 (AFRWFRSKQW…PSKDGETGLE (68 aa)).

It belongs to the amiloride-sensitive sodium channel (TC 1.A.6) family. SCNN1A subfamily. As to quaternary structure, heterotrimer; containing an alpha/SCNN1A, a beta/SCNN1B and a gamma/SCNN1G subunit. The long isoform has been found in cochlea, colon, and cartilage. The short isoform is only found in cochlea.

The protein localises to the apical cell membrane. It localises to the cell projection. Its subcellular location is the cilium. It is found in the cytoplasmic granule. The protein resides in the cytoplasm. The protein localises to the cytoplasmic vesicle. It localises to the secretory vesicle. Its subcellular location is the acrosome. It is found in the flagellum. It catalyses the reaction Na(+)(in) = Na(+)(out). Its activity is regulated as follows. Originally identified and characterized by its inhibition by the diuretic drug amiloride. Functionally, this is one of the three pore-forming subunits of the heterotrimeric epithelial sodium channel (ENaC), a critical regulator of sodium balance and fluid homeostasis. ENaC operates in epithelial tissues, where it mediates the electrodiffusion of sodium ions from extracellular fluid through the apical membrane of cells, with water following osmotically. This Gallus gallus (Chicken) protein is Epithelial sodium channel subunit alpha.